Consider the following 209-residue polypeptide: Thiamine-phosphate synthase (209 aa).

4-amino-2-methyl-5-(diphosphooxymethyl)pyrimidine is bound by residues 35-39 (QLRNK) and Asn-67. Mg(2+)-binding residues include Asp-68 and Asp-87. Residue Ser-106 coordinates 4-amino-2-methyl-5-(diphosphooxymethyl)pyrimidine. 2-[(2R,5Z)-2-carboxy-4-methylthiazol-5(2H)-ylidene]ethyl phosphate is bound at residue 132–134 (TGS). Position 135 (Lys-135) interacts with 4-amino-2-methyl-5-(diphosphooxymethyl)pyrimidine. Residues Gly-163 and 183-184 (IS) contribute to the 2-[(2R,5Z)-2-carboxy-4-methylthiazol-5(2H)-ylidene]ethyl phosphate site.

Belongs to the thiamine-phosphate synthase family. Requires Mg(2+) as cofactor.

It catalyses the reaction 2-[(2R,5Z)-2-carboxy-4-methylthiazol-5(2H)-ylidene]ethyl phosphate + 4-amino-2-methyl-5-(diphosphooxymethyl)pyrimidine + 2 H(+) = thiamine phosphate + CO2 + diphosphate. The catalysed reaction is 2-(2-carboxy-4-methylthiazol-5-yl)ethyl phosphate + 4-amino-2-methyl-5-(diphosphooxymethyl)pyrimidine + 2 H(+) = thiamine phosphate + CO2 + diphosphate. It carries out the reaction 4-methyl-5-(2-phosphooxyethyl)-thiazole + 4-amino-2-methyl-5-(diphosphooxymethyl)pyrimidine + H(+) = thiamine phosphate + diphosphate. The protein operates within cofactor biosynthesis; thiamine diphosphate biosynthesis; thiamine phosphate from 4-amino-2-methyl-5-diphosphomethylpyrimidine and 4-methyl-5-(2-phosphoethyl)-thiazole: step 1/1. Condenses 4-methyl-5-(beta-hydroxyethyl)thiazole monophosphate (THZ-P) and 2-methyl-4-amino-5-hydroxymethyl pyrimidine pyrophosphate (HMP-PP) to form thiamine monophosphate (TMP). This is Thiamine-phosphate synthase from Chlorobium phaeovibrioides (strain DSM 265 / 1930) (Prosthecochloris vibrioformis (strain DSM 265)).